The following is an 827-amino-acid chain: Periplasmic nitrate reductase (827 aa).

The tat-type signal signal peptide spans 1–32 (MTLSRRAFIKQTAAATAASAAGVVLPGVDALA). The 4Fe-4S Mo/W bis-MGD-type domain occupies 37–93 (LTWSKAPCRFCGTGCGVSVGVKNGKVVATQGDPQAEVNRGLNCVKGYFLSKIMYGQD). [4Fe-4S] cluster is bound by residues C44, C47, C51, and C79. Residues K81, Q148, N173, C177, 241–245 (STFEH), 260–262 (QSD), M371, Q375, N481, 507–508 (SD), K530, D557, and 717–726 (TGRVLEHWHS) contribute to the Mo-bis(molybdopterin guanine dinucleotide) site. W793 contributes to the substrate binding site. Residues N801 and K818 each contribute to the Mo-bis(molybdopterin guanine dinucleotide) site.

This sequence belongs to the prokaryotic molybdopterin-containing oxidoreductase family. NasA/NapA/NarB subfamily. As to quaternary structure, component of the periplasmic nitrate reductase NapAB complex composed of NapA and NapB. [4Fe-4S] cluster is required as a cofactor. The cofactor is Mo-bis(molybdopterin guanine dinucleotide). Predicted to be exported by the Tat system. The position of the signal peptide cleavage has not been experimentally proven.

It localises to the periplasm. The catalysed reaction is 2 Fe(II)-[cytochrome] + nitrate + 2 H(+) = 2 Fe(III)-[cytochrome] + nitrite + H2O. Functionally, catalytic subunit of the periplasmic nitrate reductase complex NapAB. Receives electrons from NapB and catalyzes the reduction of nitrate to nitrite. This Paraburkholderia xenovorans (strain LB400) protein is Periplasmic nitrate reductase.